The sequence spans 476 residues: Ribulose bisphosphate carboxylase large chain (476 aa).

A propeptide spanning residues 1–2 (MS) is cleaved from the precursor. The residue at position 3 (P3) is an N-acetylproline. Position 14 is an N6,N6,N6-trimethyllysine (K14). The substrate site is built by N123 and T173. The active-site Proton acceptor is K175. K177 lines the substrate pocket. Positions 201, 203, and 204 each coordinate Mg(2+). K201 is subject to N6-carboxylysine. H294 functions as the Proton acceptor in the catalytic mechanism. Substrate-binding residues include R295, H327, and S379.

The protein belongs to the RuBisCO large chain family. Type I subfamily. Heterohexadecamer of 8 large chains and 8 small chains; disulfide-linked. The disulfide link is formed within the large subunit homodimers. The cofactor is Mg(2+). In terms of processing, the disulfide bond which can form in the large chain dimeric partners within the hexadecamer appears to be associated with oxidative stress and protein turnover.

Its subcellular location is the plastid. It is found in the chloroplast. It catalyses the reaction 2 (2R)-3-phosphoglycerate + 2 H(+) = D-ribulose 1,5-bisphosphate + CO2 + H2O. The catalysed reaction is D-ribulose 1,5-bisphosphate + O2 = 2-phosphoglycolate + (2R)-3-phosphoglycerate + 2 H(+). RuBisCO catalyzes two reactions: the carboxylation of D-ribulose 1,5-bisphosphate, the primary event in carbon dioxide fixation, as well as the oxidative fragmentation of the pentose substrate in the photorespiration process. Both reactions occur simultaneously and in competition at the same active site. This Sorghum bicolor (Sorghum) protein is Ribulose bisphosphate carboxylase large chain.